The sequence spans 379 residues: MSDFLPFSRPSMGDAELAALREVLASGWITTGPKNQALEAAFCQLTGNRHAIAVSSATGGMHVTLMALGIGPGDEVITPSQTWVSTLNMICLLGATPVMIDVDNDNLMITPDAVEAAITSRTKAIIPVHYAGAPADIDAIRAVGERHGIPVIEDAAHAAGTHYKGRHIGWQGTAIFSFHAIKNMTCAEGGLIVTDDDELASRIRSLKFHGLGVDAYDRQTHGRAPQAEVITPGFKYNLADINAALALVQLEKLSHANQRRTEIAQRYLRELADTPFKPLTVPAWDHQHAWHLFIIRVDEAACGISRDALMEKLKAMGIGTGLHFRAAHTQKYYRERFPEVSLPNTEWNSARICSLPLFPDMTDDDVTRVISALRQLSGR.

Lys-182 carries the post-translational modification N6-(pyridoxal phosphate)lysine.

Belongs to the DegT/DnrJ/EryC1 family. ArnB subfamily. As to quaternary structure, homodimer. The cofactor is pyridoxal 5'-phosphate.

It carries out the reaction UDP-4-amino-4-deoxy-beta-L-arabinose + 2-oxoglutarate = UDP-beta-L-threo-pentopyranos-4-ulose + L-glutamate. Its pathway is nucleotide-sugar biosynthesis; UDP-4-deoxy-4-formamido-beta-L-arabinose biosynthesis; UDP-4-deoxy-4-formamido-beta-L-arabinose from UDP-alpha-D-glucuronate: step 2/3. The protein operates within bacterial outer membrane biogenesis; lipopolysaccharide biosynthesis. In terms of biological role, catalyzes the conversion of UDP-4-keto-arabinose (UDP-Ara4O) to UDP-4-amino-4-deoxy-L-arabinose (UDP-L-Ara4N). The modified arabinose is attached to lipid A and is required for resistance to polymyxin and cationic antimicrobial peptides. This chain is UDP-4-amino-4-deoxy-L-arabinose--oxoglutarate aminotransferase, found in Klebsiella pneumoniae (strain 342).